A 363-amino-acid polypeptide reads, in one-letter code: Uptake hydrogenase small subunit (363 aa).

The segment at residues 1-43 (MIETFYEVMRRQGISRRSFLKYCSLTATSLGLSPVFVPKIVHA) is a signal peptide (tat-type signal). Residues Cys60, Cys63, Cys158, Cys192, His230, Cys233, Cys258, and Cys264 each contribute to the [4Fe-4S] cluster site. 3 residues coordinate [3Fe-4S] cluster: Cys273, Cys292, and Cys295.

The protein belongs to the [NiFe]/[NiFeSe] hydrogenase small subunit family. Heterodimer of a large and a small subunit. It depends on [4Fe-4S] cluster as a cofactor. Requires [3Fe-4S] cluster as cofactor. Post-translationally, predicted to be exported by the Tat system. The position of the signal peptide cleavage has not been experimentally proven.

Its subcellular location is the cell membrane. It carries out the reaction H2 + A = AH2. This enzyme recycles the H(2) produced by nitrogenase to increase the production of ATP and to protect nitrogenase against inhibition or damage by O(2) under carbon- or phosphate-limited conditions. The protein is Uptake hydrogenase small subunit (hupS) of Alcaligenes hydrogenophilus.